The primary structure comprises 303 residues: Tumor necrosis factor receptor type 1-associated DEATH domain protein (303 aa).

The Nuclear export signal signature appears at 141–157; that stretch reads QKDDELAEIDERLKSIK. One can recognise a Death domain in the interval 208 to 298; it reads TSAHIQHFAK…SIALDLLSLN (91 aa). The short motif at 224–237 is the Nuclear localization signal element; that stretch reads KPVGRSLGKTCRAL.

Heterodimer with tnfrsf1a.

It is found in the nucleus. The protein localises to the cytoplasm. It localises to the cytoskeleton. Adapter molecule for tnfrsf1a that specifically associates with the cytoplasmic domain of activated tnfrsf1a mediating its interaction with fadd. The sequence is that of Tumor necrosis factor receptor type 1-associated DEATH domain protein from Xenopus laevis (African clawed frog).